The sequence spans 611 residues: Dihydroxy-acid dehydratase (611 aa).

Position 81 (D81) interacts with Mg(2+). Residue C122 participates in [2Fe-2S] cluster binding. Residues D123 and K124 each contribute to the Mg(2+) site. K124 is subject to N6-carboxylysine. Position 195 (C195) interacts with [2Fe-2S] cluster. E491 is a binding site for Mg(2+). The active-site Proton acceptor is the S517.

The protein belongs to the IlvD/Edd family. As to quaternary structure, homodimer. It depends on [2Fe-2S] cluster as a cofactor. Requires Mg(2+) as cofactor.

The enzyme catalyses (2R)-2,3-dihydroxy-3-methylbutanoate = 3-methyl-2-oxobutanoate + H2O. It carries out the reaction (2R,3R)-2,3-dihydroxy-3-methylpentanoate = (S)-3-methyl-2-oxopentanoate + H2O. Its pathway is amino-acid biosynthesis; L-isoleucine biosynthesis; L-isoleucine from 2-oxobutanoate: step 3/4. It participates in amino-acid biosynthesis; L-valine biosynthesis; L-valine from pyruvate: step 3/4. Functionally, functions in the biosynthesis of branched-chain amino acids. Catalyzes the dehydration of (2R,3R)-2,3-dihydroxy-3-methylpentanoate (2,3-dihydroxy-3-methylvalerate) into 2-oxo-3-methylpentanoate (2-oxo-3-methylvalerate) and of (2R)-2,3-dihydroxy-3-methylbutanoate (2,3-dihydroxyisovalerate) into 2-oxo-3-methylbutanoate (2-oxoisovalerate), the penultimate precursor to L-isoleucine and L-valine, respectively. In Actinobacillus pleuropneumoniae serotype 3 (strain JL03), this protein is Dihydroxy-acid dehydratase.